Reading from the N-terminus, the 448-residue chain is GA-binding protein subunit beta-2 (448 aa).

5 ANK repeats span residues 5 to 34, 37 to 66, 70 to 99, 103 to 132, and 136 to 166; these read DLGK…PFTT, LGTS…SRDA, VDRT…DVNA, LKMT…DVHA, and FDKS…QVNV. Residue Ser256 is modified to Phosphoserine. Disordered stretches follow at residues 325 to 354 and 420 to 448; these read EEEE…GNER and ELEE…TVSS. Residues 337 to 354 are compositionally biased toward basic and acidic residues; sequence RIGEKTNSVEESKEGNER. A coiled-coil region spans residues 345–395; the sequence is VEESKEGNERELLQQQLQEANRRAQEYRHQLLKKEQEAEQYRLKLEAIARQ. Residues 428 to 448 are compositionally biased toward polar residues; it reads VTGSAGTTEPHTRVSMATVSS.

In terms of assembly, heterotetramer of two alpha and two beta subunits. The C-terminal is necessary for the formation of a heterotetrameric GABP-alpha-2/beta-2 complex, and also facilitates homotypic dimerization. Interacts with ADGRB2.

The protein localises to the nucleus. May function as transcription factor capable of interacting with purine rich repeats (GA repeats). This is GA-binding protein subunit beta-2 (GABPB2) from Homo sapiens (Human).